A 1037-amino-acid polypeptide reads, in one-letter code: MARSPTSVMISSLLLLLLIGPASSDDAAAAAAARTSTGGVAGDELALLSFKSSLLHQGGLSLASWNTSGHGQHCTWVGVVCGRRRRRHPHRVVKLLLRSSNLSGIISPSLGNLSFLRELDLSDNYLSGEIPPELSRLSRLQLLELSGNSIQGSIPAAIGACTKLTSLDLSHNQLRGMIPREIGASLKHLSNLYLHTNGLSGEIPSALGNLTSLQYFDLSCNRLSGAIPSSLGQLSSSLLTMNLRQNNLSGMIPNSIWNLSSLRAFSVSENKLGGMIPTNAFKTLHLLEVIDMGTNRFYGKIPASVANASHLTQLQIDGNLFSGIITSGFGRLRNLTTLYLWRNLFQTREQEDWGFISDLTNCSKLQTLDLGENNLGGVLPNSFSNLSTSLSFLALDLNKITGSIPKDIGNLIGLQHLYLCNNNFRGSLPSSLGRLRNLGILVAYENNLSGSIPLAIGNLTELNILLLGTNKFSGWIPYTLSNLTNLLSLGLSTNNLSGPIPSELFNIQTLSIMINVSKNNLEGSIPQEIGHLKNLVEFHAESNRLSGKIPNTLGDCQLLRYLYLQNNLLSGSIPSALGQLKGLETLDLSSNNLSGQIPTSLADITMLHSLNLSFNSFMGEVPTIGAFADASGISIQGNAKLCGGIPDLHLPRCCPLLENRKHFPVLPISVSLVAALAILSSLYLLITWHKRTKKGAPSRTSMKGHPLVSYSQLVKATDGFAPTNLLGSGSFGSVYKGKLNIQDHVAVKVLKLENPKALKSFTAECEALRNMRHRNLVKIVTICSSIDNRGNDFKAIVYDFMPSGSLEDWIHPETNDPADQRHLNLHRRVTILLDVACALDYLHRHGPEPVVHCDVKSSNVLLDSDMVAHVGDFGLARILVDGTSLIQQSTSSMGFRGTIGYAAPEYGVGHIASTHGDIYSYGILVLEIVTGKRPTDSTFRPDLGLRQYVELGLHGRVTDVVDTKLILDSENWLNSTNNSPCRRITECIVSLLRLGLSCSQVLPLSRTPTGDIIDELNAIKQNLSGLFPVCEGASLEF.

Residues M1–S24 form the signal peptide. Residues D25–V665 lie on the Extracellular side of the membrane. N-linked (GlcNAc...) asparagine glycosylation is found at N66, N101, and N112. 11 LRR repeats span residues P89–N112, L113–L137, S138–C161, K163–S185, K187–L210, T211–L234, S236–L259, S260–T283, H285–A308, H310–R331, and R333–F355. A glycan (N-linked (GlcNAc...) asparagine) is linked at N209. N-linked (GlcNAc...) asparagine glycosylation is found at N247 and N258. N307 carries an N-linked (GlcNAc...) asparagine glycan. Residues N334, N361, and N385 are each glycosylated (N-linked (GlcNAc...) asparagine). LRR repeat units follow at residues C362–N385, S387–L411, I412–L435, N437–L459, T460–N482, L483–I507, T509–L532, K533–C556, Q557–L580, K581–I604, and M606–D629. 5 N-linked (GlcNAc...) asparagine glycosylation sites follow: N447, N458, N482, N495, and N515. N-linked (GlcNAc...) asparagine glycans are attached at residues N592 and N611. Residues L666–I686 traverse the membrane as a helical segment. The Cytoplasmic portion of the chain corresponds to T687–F1037. Positions H689–K694 match the Nuclear localization signal motif. S698 bears the Phosphoserine mark. Residue T700 is modified to Phosphothreonine. S701 carries the post-translational modification Phosphoserine. Position 717 is a phosphothreonine (T717). One can recognise a Protein kinase domain in the interval F720–I1019. ATP-binding positions include L726–V734 and K748. D854 (proton acceptor) is an active-site residue.

It belongs to the protein kinase superfamily. Ser/Thr protein kinase family. As to quaternary structure, interacts with WRKY62/XB10 in the nucleus. Interacts with SERK2. Mn(2+) is required as a cofactor. It depends on Mg(2+) as a cofactor. Post-translationally, undergoes protein cleavage upon X.oryzae pv. oryzae protein Ax21 detection, thus releasing the processed protein kinase Xa21 chain. In terms of processing, autophosphorylated on serine and threonine residues; these phosphorylation prevents proteolytic degradation.

The protein resides in the cell membrane. The protein localises to the endoplasmic reticulum membrane. Its subcellular location is the nucleus. The catalysed reaction is L-seryl-[protein] + ATP = O-phospho-L-seryl-[protein] + ADP + H(+). It carries out the reaction L-threonyl-[protein] + ATP = O-phospho-L-threonyl-[protein] + ADP + H(+). Functionally, receptor kinase that detects X.oryzae pv. oryzae protein Ax21 to promote innate immunity. Following X.oryzae pv. oryzae protein Ax21 detection, undergoes cleavage, releasing the processed protein kinase Xa21 chain. The processed protein kinase Xa21 chain released by protein cleavage after X.oryzae pv. oryzae protein Ax21 detection translocates into the nucleus where it can bind and regulate WRKY62, a transcription factor. Confers resistance to the bacterial pathogen X.oryzae pv. oryzae (Xoo). The polypeptide is Receptor kinase-like protein Xa21 (Oryza sativa subsp. japonica (Rice)).